Here is a 408-residue protein sequence, read N- to C-terminus: tRNA wybutosine-synthesizing protein 2 homolog (408 aa).

Residues Ser-201, Lys-208, Glu-248, and 276–277 each bind S-adenosyl-L-methionine; that span reads DN.

This sequence belongs to the class I-like SAM-binding methyltransferase superfamily. TRM5/TYW2 family.

The enzyme catalyses 4-demethylwyosine(37) in tRNA(Phe) + S-adenosyl-L-methionine = 4-demethyl-7-[(3S)-3-amino-3-carboxypropyl]wyosine(37) in tRNA(Phe) + S-methyl-5'-thioadenosine + H(+). The protein operates within tRNA modification; wybutosine-tRNA(Phe) biosynthesis. S-adenosyl-L-methionine-dependent transferase that acts as a component of the wybutosine biosynthesis pathway. Wybutosine is a hyper modified guanosine with a tricyclic base found at the 3'-position adjacent to the anticodon of eukaryotic phenylalanine tRNA. Catalyzes the transfer of the alpha-amino-alpha-carboxypropyl (acp) group from S-adenosyl-L-methionine to the C-7 position of 4-demethylwyosine (imG-14) to produce wybutosine-86. This chain is tRNA wybutosine-synthesizing protein 2 homolog (trmt12), found in Danio rerio (Zebrafish).